The chain runs to 73 residues: Large ribosomal subunit protein bL31 (73 aa).

Belongs to the bacterial ribosomal protein bL31 family. Type A subfamily. As to quaternary structure, part of the 50S ribosomal subunit.

In terms of biological role, binds the 23S rRNA. The chain is Large ribosomal subunit protein bL31 from Rhizobium johnstonii (strain DSM 114642 / LMG 32736 / 3841) (Rhizobium leguminosarum bv. viciae).